The sequence spans 290 residues: Phosphatidylglycerol--prolipoprotein diacylglyceryl transferase (290 aa).

7 helical membrane passes run 21–41 (VSLH…MWLA), 60–80 (LLYA…VLFY), 96–116 (WDGG…MFWF), 130–150 (FIAP…FING), 198–218 (SQLY…NLFI), 225–245 (GAVS…VEAF), and 258–278 (VISM…IMMI). Arg143 is a binding site for a 1,2-diacyl-sn-glycero-3-phospho-(1'-sn-glycerol).

The protein belongs to the Lgt family.

The protein localises to the cell inner membrane. It catalyses the reaction L-cysteinyl-[prolipoprotein] + a 1,2-diacyl-sn-glycero-3-phospho-(1'-sn-glycerol) = an S-1,2-diacyl-sn-glyceryl-L-cysteinyl-[prolipoprotein] + sn-glycerol 1-phosphate + H(+). Its pathway is protein modification; lipoprotein biosynthesis (diacylglyceryl transfer). Its function is as follows. Catalyzes the transfer of the diacylglyceryl group from phosphatidylglycerol to the sulfhydryl group of the N-terminal cysteine of a prolipoprotein, the first step in the formation of mature lipoproteins. In Serratia proteamaculans (strain 568), this protein is Phosphatidylglycerol--prolipoprotein diacylglyceryl transferase.